The chain runs to 754 residues: Probable TonB-dependent siderophore receptor PirA (754 aa).

Residues 1-24 (MSKRIIQSVLSVSVLASMMSMAFA) form the signal peptide. Residues 54 to 181 (EQVKQSLGVS…AGGVVNIITK (128 aa)) form the TBDR plug domain. The TBDR beta-barrel domain occupies 186–754 (ETHGSVEFYT…AYYASLKYSF (569 aa)). Polar residues predominate over residues 404-414 (VSTTQGKDSSG). The segment at 404–424 (VSTTQGKDSSGSGYGDQLAKG) is disordered. The cysteines at positions 511 and 519 are disulfide-linked. A TonB C-terminal box motif is present at residues 737–754 (QTYNEPGRAYYASLKYSF).

The protein belongs to the TonB-dependent receptor family.

It localises to the cell outer membrane. Functionally, probably involved in the initial step of iron uptake by binding iron chelating siderophores, thereby allowing extraction of iron from the environment. May bind the siderophore, ferric enterobactin, with micromolar affinity. This Acinetobacter baumannii (strain ATCC 19606 / DSM 30007 / JCM 6841 / CCUG 19606 / CIP 70.34 / NBRC 109757 / NCIMB 12457 / NCTC 12156 / 81) protein is Probable TonB-dependent siderophore receptor PirA.